A 343-amino-acid chain; its full sequence is Tribbles homolog 2 (343 aa).

The disordered stretch occupies residues 25–50; the sequence is EELSSIRSAEPSQSFSPNLGSPSPPE. Polar residues predominate over residues 29-45; the sequence is SIRSAEPSQSFSPNLGS. The 248-residue stretch at 61 to 308 folds into the Protein kinase domain; it reads IGKYLLLEPL…SQEILDHPWF (248 aa).

This sequence belongs to the protein kinase superfamily. CAMK Ser/Thr protein kinase family. Tribbles subfamily.

It localises to the cytoplasm. The protein resides in the cytoskeleton. Interacts with MAPK kinases and regulates activation of MAP kinases. Does not display kinase activity. In Mus musculus (Mouse), this protein is Tribbles homolog 2.